The chain runs to 501 residues: Nucleic-acid-binding protein from transposon X-element (501 aa).

Disordered regions lie at residues 20-71 (SSPQ…GNSN) and 105-128 (AAAK…SKPP). The CCHC-type zinc finger occupies 285–302 (VQCHRCQQIGHTAKYCRK). Disordered regions lie at residues 353–385 (RPRS…SRGG) and 400–443 (QPMS…TDAS). The span at 407–422 (QQQKQKQQPYDGSPSR) shows a compositional bias: low complexity. Over residues 434-443 (GTLQRSTDAS) the composition is skewed to polar residues.

The protein resides in the virion. Functionally, strongly basic protein that binds directly to retroviral RNA and may be involved in its packaging and in the reverse transcription process. The polypeptide is Nucleic-acid-binding protein from transposon X-element (Drosophila melanogaster (Fruit fly)).